The chain runs to 382 residues: Galactose-1-phosphate uridylyltransferase (382 aa).

Residues C52 and C55 each coordinate Zn(2+). UDP-alpha-D-glucose is bound by residues A61 and N77–D78. Position 121 (H121) interacts with Zn(2+). Position 185 (N185) interacts with UDP-alpha-D-glucose. A Zn(2+)-binding site is contributed by H196. H198 (tele-UMP-histidine intermediate) is an active-site residue. Residue Q200 coordinates UDP-alpha-D-glucose. Fe cation is bound by residues E214, H313, H330, and H332. Residues K345 to V348 and F350 to E351 each bind UDP-alpha-D-glucose.

The protein belongs to the galactose-1-phosphate uridylyltransferase type 1 family. In terms of assembly, homodimer. Zn(2+) is required as a cofactor.

The catalysed reaction is alpha-D-galactose 1-phosphate + UDP-alpha-D-glucose = alpha-D-glucose 1-phosphate + UDP-alpha-D-galactose. It participates in carbohydrate metabolism; galactose metabolism. Functionally, essential for growth on galactose but not for cellulase induction. This chain is Galactose-1-phosphate uridylyltransferase (gal7), found in Hypocrea jecorina (Trichoderma reesei).